We begin with the raw amino-acid sequence, 484 residues long: L-aspartate oxidase (484 aa).

FAD is bound by residues S11 to S14, K33, N40 to G47, and D203. The active-site Proton donor/acceptor is R270. FAD contacts are provided by residues E352 and S368–L369.

Belongs to the FAD-dependent oxidoreductase 2 family. NadB subfamily. Requires FAD as cofactor.

Its subcellular location is the cytoplasm. The catalysed reaction is L-aspartate + O2 = iminosuccinate + H2O2. The protein operates within cofactor biosynthesis; NAD(+) biosynthesis; iminoaspartate from L-aspartate (oxidase route): step 1/1. Its function is as follows. Catalyzes the oxidation of L-aspartate to iminoaspartate, the first step in the de novo biosynthesis of NAD(+). This chain is L-aspartate oxidase (nadB), found in Listeria monocytogenes serovar 1/2a (strain ATCC BAA-679 / EGD-e).